Here is a 516-residue protein sequence, read N- to C-terminus: Potassium voltage-gated channel subfamily A member 10 (516 aa).

A helical transmembrane segment spans residues 223 to 244 (VALVSVLVIVISIIIFCMETLP). Asn-261 carries N-linked (GlcNAc...) asparagine glycosylation. The chain crosses the membrane as a helical span at residues 276 to 296 (FFVIETACIIWFSFELFVRFI). Residues 308–328 (IMNIIDIVSIIPYFVTLTTEL) traverse the membrane as a helical segment. Asn-339 carries an N-linked (GlcNAc...) asparagine glycan. Residues 344 to 363 (ILRIIRLVRVFRIFKLSRHS) form a helical; Voltage-sensor membrane-spanning segment. A helical transmembrane segment spans residues 380–400 (LGLLIFFLFIGVILFSSAVYF). The Selectivity filter signature appears at 426–431 (TVGYGD). Residues 441–461 (IVGTLCAIAGVLTIALPVPVI) traverse the membrane as a helical segment. An N-linked (GlcNAc...) asparagine glycan is attached at Asn-503.

This sequence belongs to the potassium channel family. A (Shaker) (TC 1.A.1.2) subfamily. Kv1.8/KCNA10 sub-subfamily. Homotetramer. As to expression, detected in brain, cochlear sensory epithelium, cochlear ganglion, tegumentum vasculosum. Detected at low levels in cochlear lagena.

It localises to the membrane. The enzyme catalyses K(+)(in) = K(+)(out). With respect to regulation, the channel activity is up-regulated by cAMP. In terms of biological role, voltage-gated potassium ion channel that mediates K(+) permeability of excitable membranes. When opened in response to the voltage difference across the membrane, KCNA10 channel selectively allows the flow of potassium ions across the membrane down their electrochemical gradient. The protein is Potassium voltage-gated channel subfamily A member 10 (KCNA10) of Gallus gallus (Chicken).